Consider the following 392-residue polypeptide: 8-amino-7-oxononanoate synthase (392 aa).

Residue Arg21 coordinates substrate. 108-109 (GF) contributes to the pyridoxal 5'-phosphate binding site. Substrate is bound at residue His133. Residues Ser181, 206–209 (DDAH), and 237–240 (TLSK) each bind pyridoxal 5'-phosphate. Lys240 carries the post-translational modification N6-(pyridoxal phosphate)lysine. Thr354 contacts substrate.

This sequence belongs to the class-II pyridoxal-phosphate-dependent aminotransferase family. BioF subfamily. Homodimer. It depends on pyridoxal 5'-phosphate as a cofactor.

It catalyses the reaction 6-carboxyhexanoyl-[ACP] + L-alanine + H(+) = (8S)-8-amino-7-oxononanoate + holo-[ACP] + CO2. It functions in the pathway cofactor biosynthesis; biotin biosynthesis. Functionally, catalyzes the decarboxylative condensation of pimeloyl-[acyl-carrier protein] and L-alanine to produce 8-amino-7-oxononanoate (AON), [acyl-carrier protein], and carbon dioxide. This is 8-amino-7-oxononanoate synthase from Symbiobacterium thermophilum (strain DSM 24528 / JCM 14929 / IAM 14863 / T).